A 101-amino-acid chain; its full sequence is Small ribosomal subunit protein uS14 (101 aa).

Positions 46–72 (FELNRQPRDASPVRVRNRDSRDGRPRG) are disordered. Residues 61–70 (RNRDSRDGRP) show a composition bias toward basic and acidic residues.

This sequence belongs to the universal ribosomal protein uS14 family. Part of the 30S ribosomal subunit. Contacts proteins S3 and S10.

Its function is as follows. Binds 16S rRNA, required for the assembly of 30S particles and may also be responsible for determining the conformation of the 16S rRNA at the A site. In Corynebacterium diphtheriae (strain ATCC 700971 / NCTC 13129 / Biotype gravis), this protein is Small ribosomal subunit protein uS14.